Reading from the N-terminus, the 548-residue chain is MSSGETFRPTADFHPSLWRNHFLKGASDFKTVDHTATQERHEALKEEVRRMITDAEDKPVQKLRLIDEVQRLGVAYHFEKEIEDAIQKLCPIYIDSNRADLHTVSLHFRLLRQQGIKISCDVFEKFKDDEGRFKSSLINDVQGMLSLYEAAYMAVRGEHILDEAIAFTTTHLKSLVAQDHVTPKLAEQINHALYRPLRKTLPRLEARYFMSMINSTSDHLYNKTLLNFAKLDFNILLELHKEELNELTKWWKDLDFTTKLPYARDRLVELYFWDLGTYFEPQYAFGRKIMTQLNYILSIIDDTYDAYGTLEELSLFTEAVQRWNIEAVDMLPEYMKLIYRTLLDAFNEIEEDMAKQGRSHCVRYAKEENQKVIGAYSVQAKWFSEGYVPTIEEYMPIALTSCAYTFVITNSFLGMGDFATKEVFEWISNNPKVVKAASVICRLMDDMQGHEFEQKRGHVASAIECYTKQHGVSKEEAIKMFEEEVANAWKDINEELMMKPTVVARPLLGTILNLARAIDFIYKEDDGYTHSYLIKDQIASVLGDHVPF.

The Mg(2+) site is built by D301, D305, D445, and E453. Residues 301–305 (DDTYD) carry the DDXXD motif motif.

It belongs to the terpene synthase family. Tpsa subfamily. It depends on Mg(2+) as a cofactor. Mn(2+) serves as cofactor.

It carries out the reaction (2E,6E)-farnesyl diphosphate = (+)-valencene + diphosphate. Its pathway is secondary metabolite biosynthesis; terpenoid biosynthesis. Functionally, sesquiterpene synthase involved in the biosynthesis of volatile compounds which contribute to fruit flavor and aroma. Mediates the conversion of (2E,6E)-farnesyl diphosphate (FPP) into (+)-valencene. No activity detected with geranyl diphosphate (GPP). This Citrus sinensis (Sweet orange) protein is Terpene synthase 1.